A 357-amino-acid polypeptide reads, in one-letter code: Holliday junction branch migration complex subunit RuvB (357 aa).

Positions M1–I20 are disordered. A large ATPase domain (RuvB-L) region spans residues M1–Y185. ATP-binding positions include L24, R25, G66, K69, T70, S71, E132 to F134, R175, Y185, and R222. T70 serves as a coordination point for Mg(2+). The small ATPAse domain (RuvB-S) stretch occupies residues E186–D256. A head domain (RuvB-H) region spans residues T259–D357. Residues R314 and R319 each coordinate DNA.

Belongs to the RuvB family. As to quaternary structure, homohexamer. Forms an RuvA(8)-RuvB(12)-Holliday junction (HJ) complex. HJ DNA is sandwiched between 2 RuvA tetramers; dsDNA enters through RuvA and exits via RuvB. An RuvB hexamer assembles on each DNA strand where it exits the tetramer. Each RuvB hexamer is contacted by two RuvA subunits (via domain III) on 2 adjacent RuvB subunits; this complex drives branch migration. In the full resolvosome a probable DNA-RuvA(4)-RuvB(12)-RuvC(2) complex forms which resolves the HJ.

The protein resides in the cytoplasm. It catalyses the reaction ATP + H2O = ADP + phosphate + H(+). In terms of biological role, the RuvA-RuvB-RuvC complex processes Holliday junction (HJ) DNA during genetic recombination and DNA repair, while the RuvA-RuvB complex plays an important role in the rescue of blocked DNA replication forks via replication fork reversal (RFR). RuvA specifically binds to HJ cruciform DNA, conferring on it an open structure. The RuvB hexamer acts as an ATP-dependent pump, pulling dsDNA into and through the RuvAB complex. RuvB forms 2 homohexamers on either side of HJ DNA bound by 1 or 2 RuvA tetramers; 4 subunits per hexamer contact DNA at a time. Coordinated motions by a converter formed by DNA-disengaged RuvB subunits stimulates ATP hydrolysis and nucleotide exchange. Immobilization of the converter enables RuvB to convert the ATP-contained energy into a lever motion, pulling 2 nucleotides of DNA out of the RuvA tetramer per ATP hydrolyzed, thus driving DNA branch migration. The RuvB motors rotate together with the DNA substrate, which together with the progressing nucleotide cycle form the mechanistic basis for DNA recombination by continuous HJ branch migration. Branch migration allows RuvC to scan DNA until it finds its consensus sequence, where it cleaves and resolves cruciform DNA. This chain is Holliday junction branch migration complex subunit RuvB, found in Nocardia farcinica (strain IFM 10152).